Reading from the N-terminus, the 142-residue chain is Large ribosomal subunit protein uL13 (142 aa).

Belongs to the universal ribosomal protein uL13 family. Part of the 50S ribosomal subunit.

Its function is as follows. This protein is one of the early assembly proteins of the 50S ribosomal subunit, although it is not seen to bind rRNA by itself. It is important during the early stages of 50S assembly. In Ralstonia pickettii (strain 12J), this protein is Large ribosomal subunit protein uL13.